The following is a 480-amino-acid chain: Iroquois-class homeodomain protein IRX-1 (480 aa).

Residues 127-189 (DPGRPKNATR…NARRRLKKEN (63 aa)) constitute a DNA-binding region (homeobox; TALE-type). Disordered regions lie at residues 190–285 (KVTW…LGLV), 318–354 (SLAE…PLQH), and 401–480 (PHGP…LPSA). Residues 210-232 (TEGDPEKAEDDEEIDLESIDIDQ) are compositionally biased toward acidic residues. Phosphoserine is present on S241. Over residues 254-263 (ARVAPPASAR) the composition is skewed to low complexity. The segment covering 264–280 (DQSSPLSAAETLKSQDS) has biased composition (polar residues). The segment covering 339–351 (SHASAHGPPSGSP) has biased composition (low complexity).

The protein belongs to the TALE/IRO homeobox family. Expressed in specific and overlapping patterns with Irx1 and Irx2 in the developing and adult metanephric kidney. In the adult metanephros, renal expression is found in the loop of Henle in the S3 proximal tubule segment and in the thick ascending limb (TAL) of the distal tubule.

The protein resides in the nucleus. This is Iroquois-class homeodomain protein IRX-1 (Irx1) from Mus musculus (Mouse).